Consider the following 68-residue polypeptide: Small ribosomal subunit protein bS21 (68 aa).

It belongs to the bacterial ribosomal protein bS21 family.

In Ruegeria sp. (strain TM1040) (Silicibacter sp.), this protein is Small ribosomal subunit protein bS21.